Consider the following 410-residue polypeptide: Lissencephaly-1 homolog (410 aa).

In terms of domain architecture, LisH spans Q7–M39. The stretch at T56–G82 forms a coiled coil. 7 WD repeats span residues G106–K147, G148–H189, G190–T229, G232–E271, E274–T333, G336–N377, and H379–R410.

It belongs to the WD repeat LIS1/nudF family. As to quaternary structure, can self-associate. Component of the cytosolic PAF-AH (I) heterotetrameric enzyme, which is composed of PAFAH1B1 (beta), PAFAH1B2 (alpha2) and PAFAH1B3 (alpha1) subunits. The catalytic activity of the enzyme resides in the alpha1 (PAFAH1B3) and alpha2 (PAFAH1B2) subunits, whereas the beta subunit (PAFAH1B1) has regulatory activity. Trimer formation is not essential for the catalytic activity. Interacts with dynein, dynactin, nde1 and ndel1.

Its subcellular location is the cytoplasm. The protein localises to the cytoskeleton. The protein resides in the microtubule organizing center. It localises to the centrosome. Its function is as follows. Regulatory subunit (beta subunit) of the cytosolic type I platelet-activating factor (PAF) acetylhydrolase (PAF-AH (I)), an enzyme that catalyzes the hydrolyze of the acetyl group at the sn-2 position of PAF and its analogs and participates in PAF inactivation. Regulates the PAF-AH (I) activity in a catalytic dimer composition-dependent manner. Positively regulates the activity of the minus-end directed microtubule motor protein dynein. May enhance dynein-mediated microtubule sliding by targeting dynein to the microtubule plus end. Required for several dynein- and microtubule-dependent processes such as the maintenance of Golgi integrity, the peripheral transport of microtubule fragments and the coupling of the nucleus and centrosome. May be required for proliferation of neuronal precursors and neuronal migration. The sequence is that of Lissencephaly-1 homolog (pafah1b1) from Xenopus laevis (African clawed frog).